Reading from the N-terminus, the 497-residue chain is GDP-fucose protein O-fucosyltransferase 4 (497 aa).

At 1–6 (MACRRR) the chain is on the cytoplasmic side. A helical; Signal-anchor for type II membrane protein membrane pass occupies residues 7-27 (LLPCAGLGLFGVLCWVWVSFA). At 28 to 497 (SFPDDQLPLE…ITERRARGKH (470 aa)) the chain is on the lumenal side. Residue Asn169 is glycosylated (N-linked (GlcNAc...) asparagine). A disulfide bond links Cys392 and Cys395. Residues 406-427 (RAHRKDPERNPPPLPKMASNSH) form a disordered region. Asn474 is a glycosylation site (N-linked (GlcNAc...) asparagine).

This sequence belongs to the glycosyltransferase 10 family.

The protein localises to the endoplasmic reticulum membrane. The enzyme catalyses L-threonyl-[protein] + GDP-beta-L-fucose = 3-O-(alpha-L-fucosyl)-L-threonyl-[protein] + GDP + H(+). It catalyses the reaction L-seryl-[protein] + GDP-beta-L-fucose = 3-O-(alpha-L-fucosyl)-L-seryl-[protein] + GDP + H(+). The protein operates within protein modification; protein glycosylation. Functionally, protein O-fucosyltransferase that specifically catalyzes O-fucosylation of serine or threonine residues in EMI domains of target proteins. Attaches fucose through an O-glycosidic linkage. O-fucosylation of EMI domain-containing proteins may be required for facilitating protein folding and secretion. The sequence is that of GDP-fucose protein O-fucosyltransferase 4 (fut11) from Oryzias latipes (Japanese rice fish).